The sequence spans 123 residues: Large ribosomal subunit protein bL12 (123 aa).

Belongs to the bacterial ribosomal protein bL12 family. In terms of assembly, homodimer. Part of the ribosomal stalk of the 50S ribosomal subunit. Forms a multimeric L10(L12)X complex, where L10 forms an elongated spine to which 2 to 4 L12 dimers bind in a sequential fashion. Binds GTP-bound translation factors.

Its function is as follows. Forms part of the ribosomal stalk which helps the ribosome interact with GTP-bound translation factors. Is thus essential for accurate translation. The chain is Large ribosomal subunit protein bL12 from Neisseria perflava.